Consider the following 318-residue polypeptide: Probable metal transport system membrane protein CT_070 (318 aa).

Helical transmembrane passes span 1-21 (MVAS…LVFF), 39-59 (IQVI…TFLV), 64-84 (AMYA…VCLF), 94-114 (QALT…IHFI), 124-144 (ASTA…LVFL), 170-190 (IFLV…SFVC), 196-216 (IFAF…MLLL), 226-246 (AVGV…AKLI), 252-272 (EMMV…PALS), and 285-305 (TSGL…VFVC).

The protein belongs to the ABC-3 integral membrane protein family.

It is found in the cell inner membrane. In terms of biological role, part of an ATP-driven transport system CT_067/CT_068/CT_069/CT_070 for a metal. This chain is Probable metal transport system membrane protein CT_070, found in Chlamydia trachomatis serovar D (strain ATCC VR-885 / DSM 19411 / UW-3/Cx).